A 431-amino-acid chain; its full sequence is Acetylornithine aminotransferase (431 aa).

Residues 118-119 (GA) and phenylalanine 157 each bind pyridoxal 5'-phosphate. Residue arginine 160 coordinates N(2)-acetyl-L-ornithine. Pyridoxal 5'-phosphate is bound at residue 251 to 254 (DEVQ). Lysine 284 carries the post-translational modification N6-(pyridoxal phosphate)lysine. Residue serine 313 coordinates N(2)-acetyl-L-ornithine. Residue threonine 314 participates in pyridoxal 5'-phosphate binding.

Belongs to the class-III pyridoxal-phosphate-dependent aminotransferase family. ArgD subfamily. In terms of assembly, homodimer. Pyridoxal 5'-phosphate serves as cofactor.

The protein localises to the cytoplasm. It carries out the reaction N(2)-acetyl-L-ornithine + 2-oxoglutarate = N-acetyl-L-glutamate 5-semialdehyde + L-glutamate. Its pathway is amino-acid biosynthesis; L-arginine biosynthesis; N(2)-acetyl-L-ornithine from L-glutamate: step 4/4. This chain is Acetylornithine aminotransferase, found in Bifidobacterium longum (strain NCC 2705).